The primary structure comprises 200 residues: Holliday junction branch migration complex subunit RuvA (200 aa).

The interval 1–64 (MFAYFRGKLT…EDLLQLYGFS (64 aa)) is domain I. The segment at 65–143 (GEEERQLFRL…KLSPVSALAS (79 aa)) is domain II. The segment at 144 to 154 (PARLSSTLLRD) is flexible linker. A domain III region spans residues 154-200 (DDAVNALVTLGFSRIIVQKAVVAILEQNPGLTVEEVIKAALVSIHNS).

Belongs to the RuvA family. As to quaternary structure, homotetramer. Forms an RuvA(8)-RuvB(12)-Holliday junction (HJ) complex. HJ DNA is sandwiched between 2 RuvA tetramers; dsDNA enters through RuvA and exits via RuvB. An RuvB hexamer assembles on each DNA strand where it exits the tetramer. Each RuvB hexamer is contacted by two RuvA subunits (via domain III) on 2 adjacent RuvB subunits; this complex drives branch migration. In the full resolvosome a probable DNA-RuvA(4)-RuvB(12)-RuvC(2) complex forms which resolves the HJ.

The protein localises to the cytoplasm. Its function is as follows. The RuvA-RuvB-RuvC complex processes Holliday junction (HJ) DNA during genetic recombination and DNA repair, while the RuvA-RuvB complex plays an important role in the rescue of blocked DNA replication forks via replication fork reversal (RFR). RuvA specifically binds to HJ cruciform DNA, conferring on it an open structure. The RuvB hexamer acts as an ATP-dependent pump, pulling dsDNA into and through the RuvAB complex. HJ branch migration allows RuvC to scan DNA until it finds its consensus sequence, where it cleaves and resolves the cruciform DNA. The sequence is that of Holliday junction branch migration complex subunit RuvA from Pelodictyon phaeoclathratiforme (strain DSM 5477 / BU-1).